The primary structure comprises 391 residues: NAD(P)H-quinone oxidoreductase subunit H, chloroplastic (391 aa).

Belongs to the complex I 49 kDa subunit family. In terms of assembly, NDH is composed of at least 16 different subunits, 5 of which are encoded in the nucleus.

It is found in the plastid. It localises to the chloroplast thylakoid membrane. The catalysed reaction is a plastoquinone + NADH + (n+1) H(+)(in) = a plastoquinol + NAD(+) + n H(+)(out). It carries out the reaction a plastoquinone + NADPH + (n+1) H(+)(in) = a plastoquinol + NADP(+) + n H(+)(out). NDH shuttles electrons from NAD(P)H:plastoquinone, via FMN and iron-sulfur (Fe-S) centers, to quinones in the photosynthetic chain and possibly in a chloroplast respiratory chain. The immediate electron acceptor for the enzyme in this species is believed to be plastoquinone. Couples the redox reaction to proton translocation, and thus conserves the redox energy in a proton gradient. This chain is NAD(P)H-quinone oxidoreductase subunit H, chloroplastic, found in Physcomitrium patens (Spreading-leaved earth moss).